The sequence spans 634 residues: Factor of DNA methylation 5 (634 aa).

Residues 254 to 469 (IVVDDLANKI…EDTNSALMVK (216 aa)) adopt a coiled-coil conformation.

Functionally, acts in association with FDM3 and FDM4 for RNA-directed DNA methylation (RdDM). The polypeptide is Factor of DNA methylation 5 (Arabidopsis thaliana (Mouse-ear cress)).